The sequence spans 100 residues: MDARDIILRPVITEKSTNLMDDKKYTFDVLLTATKTQVRNAVEEIFDVKVKSVNIMNVRGKDKRVGRYTGKTARRRKAIVALTDDSNDIKIFQENTEDNK.

Belongs to the universal ribosomal protein uL23 family. Part of the 50S ribosomal subunit. Contacts protein L29, and trigger factor when it is bound to the ribosome.

Its function is as follows. One of the early assembly proteins it binds 23S rRNA. One of the proteins that surrounds the polypeptide exit tunnel on the outside of the ribosome. Forms the main docking site for trigger factor binding to the ribosome. In Lactobacillus acidophilus (strain ATCC 700396 / NCK56 / N2 / NCFM), this protein is Large ribosomal subunit protein uL23.